Consider the following 434-residue polypeptide: Adenylosuccinate synthetase (434 aa).

Residues 22 to 28 (GDEGKGK) and 50 to 52 (GHT) each bind GTP. The active-site Proton acceptor is the D23. The Mg(2+) site is built by D23 and G50. IMP-binding positions include 23–26 (DEGK), 48–51 (NAGH), T139, R153, Q234, T249, and R313. The Proton donor role is filled by H51. 309 to 315 (ATTGRKR) lines the substrate pocket. GTP contacts are provided by residues R315, 341 to 343 (KLD), and 423 to 425 (SVG).

This sequence belongs to the adenylosuccinate synthetase family. In terms of assembly, homodimer. Mg(2+) is required as a cofactor.

It localises to the cytoplasm. It carries out the reaction IMP + L-aspartate + GTP = N(6)-(1,2-dicarboxyethyl)-AMP + GDP + phosphate + 2 H(+). The protein operates within purine metabolism; AMP biosynthesis via de novo pathway; AMP from IMP: step 1/2. Functionally, plays an important role in the de novo pathway of purine nucleotide biosynthesis. Catalyzes the first committed step in the biosynthesis of AMP from IMP. The polypeptide is Adenylosuccinate synthetase (Chlorobium phaeobacteroides (strain DSM 266 / SMG 266 / 2430)).